The following is a 70-amino-acid chain: Virion membrane protein OPG139 (70 aa).

A helical transmembrane segment spans residues Met1–Ser21. Topologically, residues Met22–Val70 are virion surface. A disordered region spans residues Gln30–Phe50. Positions Asn33–Pro45 are enriched in pro residues. At Ser40 the chain carries Phosphoserine; by host.

The protein belongs to the orthopoxvirus OPG139 family. In terms of processing, phosphorylated by a OPG054-independent mechanism.

The protein resides in the virion membrane. Functionally, essential for the encapsidation of DNA into immature virions (IV) and the subsequent maturation of IV into mature virions (MV). The polypeptide is Virion membrane protein OPG139 (OPG139) (Homo sapiens (Human)).